A 376-amino-acid polypeptide reads, in one-letter code: Alanine racemase (376 aa).

The active-site Proton acceptor; specific for D-alanine is the Lys-44. N6-(pyridoxal phosphate)lysine is present on Lys-44. Arg-139 contributes to the substrate binding site. The active-site Proton acceptor; specific for L-alanine is Tyr-271. Met-319 serves as a coordination point for substrate.

The protein belongs to the alanine racemase family. It depends on pyridoxal 5'-phosphate as a cofactor.

It carries out the reaction L-alanine = D-alanine. The protein operates within amino-acid biosynthesis; D-alanine biosynthesis; D-alanine from L-alanine: step 1/1. Catalyzes the interconversion of L-alanine and D-alanine. May also act on other amino acids. This is Alanine racemase (alr) from Bordetella petrii (strain ATCC BAA-461 / DSM 12804 / CCUG 43448).